A 209-amino-acid chain; its full sequence is Small ribosomal subunit protein uS4 (209 aa).

Positions 98–166 constitute an S4 RNA-binding domain; the sequence is RRLDNVVYRL…IKQAIELNKG (69 aa).

This sequence belongs to the universal ribosomal protein uS4 family. Part of the 30S ribosomal subunit. Contacts protein S5. The interaction surface between S4 and S5 is involved in control of translational fidelity.

Functionally, one of the primary rRNA binding proteins, it binds directly to 16S rRNA where it nucleates assembly of the body of the 30S subunit. Its function is as follows. With S5 and S12 plays an important role in translational accuracy. The protein is Small ribosomal subunit protein uS4 of Fervidobacterium nodosum (strain ATCC 35602 / DSM 5306 / Rt17-B1).